Here is a 310-residue protein sequence, read N- to C-terminus: Proline dehydrogenase (310 aa).

Position 98 (K98) interacts with substrate. D135 is an active-site residue. Residues M136, Q166, 187 to 192 (RMVKGA), 229 to 230 (TH), and 292 to 295 (RIAE) contribute to the FAD site. The active site involves R187. 291–292 (RR) serves as a coordination point for substrate.

Belongs to the proline dehydrogenase family. It depends on FAD as a cofactor.

The enzyme catalyses L-proline + a quinone = (S)-1-pyrroline-5-carboxylate + a quinol + H(+). Its pathway is amino-acid degradation; L-proline degradation into L-glutamate; L-glutamate from L-proline: step 1/2. Functionally, converts proline to delta-1-pyrroline-5-carboxylate. The polypeptide is Proline dehydrogenase (Deinococcus radiodurans (strain ATCC 13939 / DSM 20539 / JCM 16871 / CCUG 27074 / LMG 4051 / NBRC 15346 / NCIMB 9279 / VKM B-1422 / R1)).